Reading from the N-terminus, the 302-residue chain is Methionyl-tRNA formyltransferase (302 aa).

A (6S)-5,6,7,8-tetrahydrofolate-binding site is contributed by 108 to 111 (SLLP).

It belongs to the Fmt family.

The enzyme catalyses L-methionyl-tRNA(fMet) + (6R)-10-formyltetrahydrofolate = N-formyl-L-methionyl-tRNA(fMet) + (6S)-5,6,7,8-tetrahydrofolate + H(+). Functionally, attaches a formyl group to the free amino group of methionyl-tRNA(fMet). The formyl group appears to play a dual role in the initiator identity of N-formylmethionyl-tRNA by promoting its recognition by IF2 and preventing the misappropriation of this tRNA by the elongation apparatus. The polypeptide is Methionyl-tRNA formyltransferase (Cereibacter sphaeroides (strain ATCC 17025 / ATH 2.4.3) (Rhodobacter sphaeroides)).